Consider the following 210-residue polypeptide: MKQGVFVAIEGVDGAGKTVLLEAFKQRFPQSFLGFKTLFSREPGGTPLAEKIRALLLHEAMEPLTEAYLFAASRTEHVRQLIQPALQQKQLVIVDRFVWSSYAYQGLIKKVGLDVVKKLNADAVGDSMPDFTFIVDCDFETALNRMAKRGQDNLLDNTVKKQADFNTMRQYYHSLVDNKRVFLLDGQNQTGCLEQFIEQLSQCLTQPTLS.

11 to 18 contributes to the ATP binding site; sequence GVDGAGKT.

This sequence belongs to the thymidylate kinase family.

The enzyme catalyses dTMP + ATP = dTDP + ADP. Its function is as follows. Phosphorylation of dTMP to form dTDP in both de novo and salvage pathways of dTTP synthesis. In Mycoplasma pneumoniae (strain ATCC 29342 / M129 / Subtype 1) (Mycoplasmoides pneumoniae), this protein is Thymidylate kinase (tmk).